We begin with the raw amino-acid sequence, 344 residues long: Centromere protein L (344 aa).

Serine 39 is subject to Phosphoserine. Threonine 43 carries the phosphothreonine modification. Residue serine 53 is modified to Phosphoserine.

It belongs to the CENP-L/IML3 family. As to quaternary structure, component of the CENPA-CAD complex, composed of CENPI, CENPK, CENPL, CENPO, CENPP, CENPQ, CENPR and CENPS. The CENPA-CAD complex interacts with the CENPA-NAC complex, at least composed of CENPA, CENPC, CENPH, CENPM, CENPN, CENPT and CENPU.

It is found in the nucleus. It localises to the chromosome. The protein resides in the centromere. In terms of biological role, component of the CENPA-CAD (nucleosome distal) complex, a complex recruited to centromeres which is involved in assembly of kinetochore proteins, mitotic progression and chromosome segregation. May be involved in incorporation of newly synthesized CENPA into centromeres via its interaction with the CENPA-NAC complex. This chain is Centromere protein L (CENPL), found in Homo sapiens (Human).